Reading from the N-terminus, the 1083-residue chain is Ubiquitin-protein ligase E3C (1083 aa).

Basic and acidic residues-rich tracts occupy residues M1–T10 and S20–E40. A disordered region spans residues M1–E40. Residues M1–R60 are cis-determinant of acceptor ubiquitin-binding. One can recognise an IQ domain in the interval R45 to D74. A disordered region spans residues S355–R385. Residues A375 to R385 are compositionally biased toward basic and acidic residues. The HECT domain occupies N744 to S1083. A Glycyl lysine isopeptide (Lys-Gly) (interchain with G-Cter in ubiquitin); by autocatalysis cross-link involves residue K903. The active-site Glycyl thioester intermediate is C1051.

Belongs to the UBE3C family. In terms of assembly, interacts with 26S proteasomes. Interacts (via the HECT domain) with UBE2D1 and, less efficiently, with UBE2L3. Autoubiquitinated; promoting its own degradation. Highly expressed in skeletal muscle. Detected at much lower levels in kidney and pancreas.

It carries out the reaction S-ubiquitinyl-[E2 ubiquitin-conjugating enzyme]-L-cysteine + [acceptor protein]-L-lysine = [E2 ubiquitin-conjugating enzyme]-L-cysteine + N(6)-ubiquitinyl-[acceptor protein]-L-lysine.. It functions in the pathway protein modification; protein ubiquitination. Its function is as follows. E3 ubiquitin-protein ligase that specifically catalyzes 'Lys-29'- and 'Lys-48'-linked polyubiquitin chains. Accepts ubiquitin from the E2 ubiquitin-conjugating enzyme UBE2D1 in the form of a thioester and then directly transfers the ubiquitin to targeted substrates. Associates with the proteasome and promotes elongation of ubiquitin chains on substrates bound to the 26S proteasome. Also catalyzes 'Lys-29'- and 'Lys-48'-linked ubiquitination of 26S proteasome subunit ADRM1/RPN13 in response to proteotoxic stress, impairing the ability of the proteasome to bind and degrade ubiquitin-conjugated proteins. Acts as a negative regulator of autophagy by mediating 'Lys-29'- and 'Lys-48'-linked ubiquitination of PIK3C3/VPS34, promoting its degradation. Can assemble unanchored poly-ubiquitin chains in either 'Lys-29'- or 'Lys-48'-linked polyubiquitin chains; with some preference for 'Lys-48' linkages. Acts as a negative regulator of type I interferon by mediating 'Lys-48'-linked ubiquitination of IRF3 and IRF7, leading to their degradation by the proteasome. Catalyzes ubiquitination and degradation of CAND2. This is Ubiquitin-protein ligase E3C from Homo sapiens (Human).